The following is a 67-amino-acid chain: Large ribosomal subunit protein bL35 (67 aa).

The disordered stretch occupies residues 1-41; that stretch reads MPKMKTHRGAAKRFKKTGTGKLKRSHAYTSHMFRHKSQKQK.

It belongs to the bacterial ribosomal protein bL35 family.

This is Large ribosomal subunit protein bL35 from Shouchella clausii (strain KSM-K16) (Alkalihalobacillus clausii).